The sequence spans 470 residues: Fumarate hydratase class II (470 aa).

Residues 99–101 (SGT), 129–132 (HPND), 139–141 (SSN), and T187 each bind substrate. The Proton donor/acceptor role is filled by H188. The active site involves S318. Substrate is bound by residues S319 and 324-326 (KIN).

The protein belongs to the class-II fumarase/aspartase family. Fumarase subfamily. As to quaternary structure, homotetramer.

Its subcellular location is the cytoplasm. It catalyses the reaction (S)-malate = fumarate + H2O. It participates in carbohydrate metabolism; tricarboxylic acid cycle; (S)-malate from fumarate: step 1/1. Involved in the TCA cycle. Catalyzes the stereospecific interconversion of fumarate to L-malate. The sequence is that of Fumarate hydratase class II from Halobacterium salinarum (strain ATCC 700922 / JCM 11081 / NRC-1) (Halobacterium halobium).